The chain runs to 153 residues: UPF0756 membrane protein LSEI_1366 (153 aa).

Transmembrane regions (helical) follow at residues 4 to 24 (WLFLLGILAIAIVGKNKSLII), 52 to 72 (WGVTVISAAIMVPIATGEIGF), 85 to 105 (WIAIGCGVLVAVLSAKGVGLL), and 115 to 135 (LVFGTIIGVVFLKGIAAGPVI).

This sequence belongs to the UPF0756 family.

The protein localises to the cell membrane. The polypeptide is UPF0756 membrane protein LSEI_1366 (Lacticaseibacillus paracasei (strain ATCC 334 / BCRC 17002 / CCUG 31169 / CIP 107868 / KCTC 3260 / NRRL B-441) (Lactobacillus paracasei)).